We begin with the raw amino-acid sequence, 451 residues long: Probable multidrug resistance protein NorM (451 aa).

A run of 12 helical transmembrane segments spans residues 23–43 (GPVV…TAVI), 53–73 (AAAY…GVML), 101–121 (LALL…FVLP), 132–152 (LVAA…AFIA), 169–189 (VALT…FGWG), 194–214 (LGLA…AALL), 243–263 (WPIG…TLLM), 277–297 (TMQT…ATGV), 316–336 (LVGL…ELAA), 355–375 (LIAA…MDGL), 391–411 (VPLL…GSVL), and 422–442 (LWFG…GRFL).

This sequence belongs to the multi antimicrobial extrusion (MATE) (TC 2.A.66.1) family.

Its subcellular location is the cell membrane. In terms of biological role, multidrug efflux pump. The sequence is that of Probable multidrug resistance protein NorM (norM) from Deinococcus radiodurans (strain ATCC 13939 / DSM 20539 / JCM 16871 / CCUG 27074 / LMG 4051 / NBRC 15346 / NCIMB 9279 / VKM B-1422 / R1).